Reading from the N-terminus, the 151-residue chain is Deoxyuridine 5'-triphosphate nucleotidohydrolase (151 aa).

Residues 70 to 72 (RSG), N83, 87 to 89 (LID), and M97 contribute to the substrate site.

It belongs to the dUTPase family. In terms of assembly, homotrimer. It depends on Mg(2+) as a cofactor.

It carries out the reaction dUTP + H2O = dUMP + diphosphate + H(+). The protein operates within pyrimidine metabolism; dUMP biosynthesis; dUMP from dCTP (dUTP route): step 2/2. This enzyme is involved in nucleotide metabolism: it produces dUMP, the immediate precursor of thymidine nucleotides and it decreases the intracellular concentration of dUTP so that uracil cannot be incorporated into DNA. This is Deoxyuridine 5'-triphosphate nucleotidohydrolase from Escherichia coli (strain K12 / MC4100 / BW2952).